The chain runs to 427 residues: Trigger factor (427 aa).

Positions 163 to 248 constitute a PPIase FKBP-type domain; that stretch reads GDTVVIDFVG…VHEVKAKEVP (86 aa).

It belongs to the FKBP-type PPIase family. Tig subfamily.

Its subcellular location is the cytoplasm. It carries out the reaction [protein]-peptidylproline (omega=180) = [protein]-peptidylproline (omega=0). Involved in protein export. Acts as a chaperone by maintaining the newly synthesized protein in an open conformation. Functions as a peptidyl-prolyl cis-trans isomerase. In Streptococcus equi subsp. zooepidemicus (strain MGCS10565), this protein is Trigger factor.